A 70-amino-acid chain; its full sequence is Guanine nucleotide-binding protein G(I)/G(S)/G(O) subunit gamma-8 (70 aa).

Residue cysteine 67 is modified to Cysteine methyl ester. Cysteine 67 carries S-geranylgeranyl cysteine lipidation. Positions 68–70 are cleaved as a propeptide — removed in mature form; it reads TLL.

It belongs to the G protein gamma family. G proteins are composed of 3 units, alpha, beta and gamma. As to expression, detected in the olfactory epithelium, the vomeronasal epithelium and, to a lesser extent, the olfactory bulb.

It is found in the cell membrane. Functionally, guanine nucleotide-binding proteins (G proteins) are involved as a modulator or transducer in various transmembrane signaling systems. The beta and gamma chains are required for the GTPase activity, for replacement of GDP by GTP, and for G protein-effector interaction. This subunit may have a very specific role in the development and turnover of olfactory and vomeronasal neurons. This Rattus norvegicus (Rat) protein is Guanine nucleotide-binding protein G(I)/G(S)/G(O) subunit gamma-8 (Gng8).